Here is a 268-residue protein sequence, read N- to C-terminus: Thymidylate synthase (268 aa).

R27 is a dUMP binding site. A (6R)-5,10-methylene-5,6,7,8-tetrahydrofolate-binding site is contributed by H57. 132 to 133 (RR) lines the dUMP pocket. C152 (nucleophile) is an active-site residue. Residues 172–175 (RSAD), N183, and 213–215 (HVY) contribute to the dUMP site. Residue D175 coordinates (6R)-5,10-methylene-5,6,7,8-tetrahydrofolate. A267 contributes to the (6R)-5,10-methylene-5,6,7,8-tetrahydrofolate binding site.

The protein belongs to the thymidylate synthase family. Bacterial-type ThyA subfamily. Homodimer.

The protein localises to the cytoplasm. It carries out the reaction dUMP + (6R)-5,10-methylene-5,6,7,8-tetrahydrofolate = 7,8-dihydrofolate + dTMP. The protein operates within pyrimidine metabolism; dTTP biosynthesis. Functionally, catalyzes the reductive methylation of 2'-deoxyuridine-5'-monophosphate (dUMP) to 2'-deoxythymidine-5'-monophosphate (dTMP) while utilizing 5,10-methylenetetrahydrofolate (mTHF) as the methyl donor and reductant in the reaction, yielding dihydrofolate (DHF) as a by-product. This enzymatic reaction provides an intracellular de novo source of dTMP, an essential precursor for DNA biosynthesis. This Kineococcus radiotolerans (strain ATCC BAA-149 / DSM 14245 / SRS30216) protein is Thymidylate synthase.